The following is a 173-amino-acid chain: NADH-ubiquinone oxidoreductase chain 6 (173 aa).

The next 4 helical transmembrane spans lie at 24 to 44, 49 to 69, 80 to 100, and 139 to 159; these read MSIM…TGTM, WLSY…FIYI, IKIN…TLMY, and PTVI…LAVV.

Belongs to the complex I subunit 6 family.

It is found in the mitochondrion membrane. It carries out the reaction a ubiquinone + NADH + 5 H(+)(in) = a ubiquinol + NAD(+) + 4 H(+)(out). Core subunit of the mitochondrial membrane respiratory chain NADH dehydrogenase (Complex I) that is believed to belong to the minimal assembly required for catalysis. Complex I functions in the transfer of electrons from NADH to the respiratory chain. The immediate electron acceptor for the enzyme is believed to be ubiquinone. The sequence is that of NADH-ubiquinone oxidoreductase chain 6 (ND6) from Locusta migratoria (Migratory locust).